The sequence spans 301 residues: Protein FdhE homolog (301 aa).

The protein belongs to the FdhE family.

It is found in the cytoplasm. Necessary for formate dehydrogenase activity. This chain is Protein FdhE homolog, found in Shewanella baltica (strain OS223).